The primary structure comprises 185 residues: Large ribosomal subunit protein uL5 (185 aa).

Belongs to the universal ribosomal protein uL5 family. Part of the 50S ribosomal subunit; part of the 5S rRNA/L5/L18/L25 subcomplex. Contacts the 5S rRNA and the P site tRNA. Forms a bridge to the 30S subunit in the 70S ribosome.

In terms of biological role, this is one of the proteins that bind and probably mediate the attachment of the 5S RNA into the large ribosomal subunit, where it forms part of the central protuberance. In the 70S ribosome it contacts protein S13 of the 30S subunit (bridge B1b), connecting the 2 subunits; this bridge is implicated in subunit movement. Contacts the P site tRNA; the 5S rRNA and some of its associated proteins might help stabilize positioning of ribosome-bound tRNAs. The chain is Large ribosomal subunit protein uL5 from Phocaeicola vulgatus (strain ATCC 8482 / DSM 1447 / JCM 5826 / CCUG 4940 / NBRC 14291 / NCTC 11154) (Bacteroides vulgatus).